Here is a 296-residue protein sequence, read N- to C-terminus: Light-independent protochlorophyllide reductase iron-sulfur ATP-binding protein (296 aa).

ATP contacts are provided by residues 39 to 44 (GIGKST) and K68. S43 serves as a coordination point for Mg(2+). Residues C124 and C158 each contribute to the [4Fe-4S] cluster site. 209–210 (NR) provides a ligand contact to ATP.

The protein belongs to the NifH/BchL/ChlL family. As to quaternary structure, homodimer. Protochlorophyllide reductase is composed of three subunits; ChlL, ChlN and ChlB. It depends on [4Fe-4S] cluster as a cofactor.

The catalysed reaction is chlorophyllide a + oxidized 2[4Fe-4S]-[ferredoxin] + 2 ADP + 2 phosphate = protochlorophyllide a + reduced 2[4Fe-4S]-[ferredoxin] + 2 ATP + 2 H2O. It functions in the pathway porphyrin-containing compound metabolism; chlorophyll biosynthesis (light-independent). In terms of biological role, component of the dark-operative protochlorophyllide reductase (DPOR) that uses Mg-ATP and reduced ferredoxin to reduce ring D of protochlorophyllide (Pchlide) to form chlorophyllide a (Chlide). This reaction is light-independent. The L component serves as a unique electron donor to the NB-component of the complex, and binds Mg-ATP. The chain is Light-independent protochlorophyllide reductase iron-sulfur ATP-binding protein from Synechococcus sp. (strain WH7803).